The following is a 61-amino-acid chain: Small ribosomal subunit protein uS14 (61 aa).

Positions 24, 27, 40, and 43 each coordinate Zn(2+).

Belongs to the universal ribosomal protein uS14 family. Zinc-binding uS14 subfamily. Part of the 30S ribosomal subunit. Contacts proteins S3 and S10. The cofactor is Zn(2+).

In terms of biological role, binds 16S rRNA, required for the assembly of 30S particles and may also be responsible for determining the conformation of the 16S rRNA at the A site. This is Small ribosomal subunit protein uS14 from Anoxybacillus flavithermus (strain DSM 21510 / WK1).